The primary structure comprises 191 residues: Glycerol-3-phosphate acyltransferase (191 aa).

The next 5 helical transmembrane spans lie at 3-23, 51-71, 78-98, 108-128, and 150-170; these read YLIVALSSYLLGSIPFGFILT, TLGYATLLLDITKAVLPVLYV, YIFIASLSAFLGHVFPIWLKF, VGILFSINIFLGLVFIISWAV, and YLIVFENYNSIFFIIMFVLIF.

Belongs to the PlsY family. In terms of assembly, probably interacts with PlsX.

Its subcellular location is the cell inner membrane. It carries out the reaction an acyl phosphate + sn-glycerol 3-phosphate = a 1-acyl-sn-glycero-3-phosphate + phosphate. The protein operates within lipid metabolism; phospholipid metabolism. Catalyzes the transfer of an acyl group from acyl-phosphate (acyl-PO(4)) to glycerol-3-phosphate (G3P) to form lysophosphatidic acid (LPA). This enzyme utilizes acyl-phosphate as fatty acyl donor, but not acyl-CoA or acyl-ACP. The sequence is that of Glycerol-3-phosphate acyltransferase from Pelagibacter ubique (strain HTCC1062).